The primary structure comprises 560 residues: Mitogen-activated protein kinase kinase kinase 3 (560 aa).

The disordered stretch occupies residues 70-91; sequence KRQSSSSSDNTSDKEEVETEET. The 255-residue stretch at 303–557 folds into the Protein kinase domain; the sequence is WLKGQLLGRG…AAELLHHPFV (255 aa). Residues 309-317 and Lys-331 each bind ATP; that span reads LGRGSYASV. Asp-426 (proton acceptor) is an active-site residue.

This sequence belongs to the protein kinase superfamily. STE Ser/Thr protein kinase family. MAP kinase kinase kinase subfamily. Expressed at low levels in roots, stems, siliques, leaves, seedlings and flower buds.

The catalysed reaction is L-seryl-[protein] + ATP = O-phospho-L-seryl-[protein] + ADP + H(+). The enzyme catalyses L-threonyl-[protein] + ATP = O-phospho-L-threonyl-[protein] + ADP + H(+). In Arabidopsis thaliana (Mouse-ear cress), this protein is Mitogen-activated protein kinase kinase kinase 3.